The sequence spans 879 residues: Phosphoenolpyruvate carboxylase (879 aa).

Residues His138 and Lys545 contribute to the active site.

Belongs to the PEPCase type 1 family. The cofactor is Mg(2+).

It catalyses the reaction oxaloacetate + phosphate = phosphoenolpyruvate + hydrogencarbonate. Functionally, forms oxaloacetate, a four-carbon dicarboxylic acid source for the tricarboxylic acid cycle. The polypeptide is Phosphoenolpyruvate carboxylase (Histophilus somni (strain 2336) (Haemophilus somnus)).